Here is a 299-residue protein sequence, read N- to C-terminus: Palmitoyltransferase ZDHHC3 (299 aa).

At 1–47 (MMLIPTHHFRNIERKPEYLQPEKCVPPPYPGPVGTMWFIRDGCGIAC) the chain is on the cytoplasmic side. The residue at position 18 (Tyr-18) is a Phosphotyrosine. Residues 48-68 (AIVTWFLVLYAEFVVLFVMLI) form a helical membrane-spanning segment. Residues 69–72 (PSRD) are Extracellular-facing. A helical membrane pass occupies residues 73-93 (YVYSIINGIVFNLLAFLALAS). The Cytoplasmic segment spans residues 94-171 (HCRAMLTDPG…NCVGENNQKY (78 aa)). The DHHC domain occupies 127–177 (YKCPKCCSIKPDRAHHCSVCKRCIRKMDHHCPWVNNCVGENNQKYFVLFTM). Residue Cys-146 is the site of S-palmitoyl cysteine attachment. The S-palmitoyl cysteine intermediate role is filled by Cys-157. A helical transmembrane segment spans residues 172–192 (FVLFTMYIALISLHALIMVGF). At 193–214 (HFLHCFEEDWTKCSSFSPPTTV) the chain is on the extracellular side. Residues 215–235 (ILLILLCFEGLLFLIFTSVMF) traverse the membrane as a helical segment. Residues 236–299 (GTQVHSICTD…GKADPYQYVV (64 aa)) lie on the Cytoplasmic side of the membrane.

Belongs to the DHHC palmitoyltransferase family. Monomer. Homooligomers. The monomeric form has a higher catalytic activity. Forms heterooligomers with ZDHHC7. Interacts with TNFRSF10A. Autopalmitoylated. In terms of processing, phosphorylation by FGFR1 and SRC probably regulates the palmitoyltransferase activity. Widely expressed with significant expression in heart, lung, liver, skeletal muscle, kidney, testis, thymus, small intestine and leukocyte.

Its subcellular location is the golgi apparatus membrane. The catalysed reaction is L-cysteinyl-[protein] + hexadecanoyl-CoA = S-hexadecanoyl-L-cysteinyl-[protein] + CoA. The enzyme catalyses L-cysteinyl-[protein] + tetradecanoyl-CoA = S-tetradecanoyl-L-cysteinyl-[protein] + CoA. It carries out the reaction L-cysteinyl-[protein] + octadecanoyl-CoA = S-octadecanoyl-L-cysteinyl-[protein] + CoA. Its function is as follows. Golgi-localized palmitoyltransferase that catalyzes the addition of palmitate onto various protein substrates. Has no stringent fatty acid selectivity and in addition to palmitate can also transfer onto target proteins myristate from tetradecanoyl-CoA and stearate from octadecanoyl-CoA. Plays an important role in G protein-coupled receptor signaling pathways involving GNAQ and potentially other heterotrimeric G proteins by regulating their dynamic association with the plasma membrane. Palmitoylates ITGA6 and ITGB4, thereby regulating the alpha-6/beta-4 integrin localization, expression and function in cell adhesion to laminin. Plays a role in the TRAIL-activated apoptotic signaling pathway most probably through the palmitoylation and localization to the plasma membrane of TNFRSF10A. In the brain, by palmitoylating the gamma subunit GABRG2 of GABA(A) receptors and regulating their postsynaptic accumulation, plays a role in synaptic GABAergic inhibitory function and GABAergic innervation. Palmitoylates the neuronal protein GAP43 which is also involved in the formation of GABAergic synapses. Palmitoylates NCDN thereby regulating its association with endosome membranes. Probably palmitoylates PRCD and is involved in its proper localization within the photoreceptor. Could mediate the palmitoylation of NCAM1 and regulate neurite outgrowth. Could palmitoylate DNAJC5 and regulate its localization to Golgi membranes. Also constitutively palmitoylates DLG4. May also palmitoylate SNAP25. Could palmitoylate the glutamate receptors GRIA1 and GRIA2 but this has not been confirmed in vivo. Could also palmitoylate the D(2) dopamine receptor DRD2. May also palmitoylate LAMTOR1, promoting its localization to lysosomal membranes. Palmitoylates the Toll-like receptor 9/TLR9 in the Golgi and thereby regulates TLR9 trafficking to endosomes. May palmitoylate CALHM1 and CALHM3 subunits of gustatory voltage-gated ion channels and modulate channel gating and kinetics. In terms of biological role, may also function as a calcium transporter. This Homo sapiens (Human) protein is Palmitoyltransferase ZDHHC3.